The chain runs to 158 residues: Cytochrome b562 (158 aa).

The next 4 membrane-spanning stretches (helical) occupy residues 12 to 32 (ITLH…GETM), 46 to 66 (AGVG…LTLV), 87 to 107 (VAAG…ALGM), and 121 to 141 (HVLA…SALF). 2 residues coordinate heme b: His15 and His53. Heme b contacts are provided by His121 and His135.

This sequence belongs to the cytochrome b561 family. As to quaternary structure, homodimer. Requires heme b as cofactor.

The protein resides in the cell membrane. In terms of biological role, cytochrome b562 is an integral component of the cytochrome b-c1 complex in the cyclic electron transfer system of photosynthetic bacteria. This Cereibacter sphaeroides (strain ATCC 17023 / DSM 158 / JCM 6121 / CCUG 31486 / LMG 2827 / NBRC 12203 / NCIMB 8253 / ATH 2.4.1.) (Rhodobacter sphaeroides) protein is Cytochrome b562.